We begin with the raw amino-acid sequence, 320 residues long: Methylenetetrahydrofolate dehydrogenase [NAD(+)] (320 aa).

C150 is a catalytic residue. NAD(+) is bound by residues 185-186 (RS), 208-209 (DV), and 274-276 (FAC).

Belongs to the tetrahydrofolate dehydrogenase/cyclohydrolase family. Homodimer. The N-terminus is blocked.

The protein resides in the cytoplasm. It localises to the nucleus. The catalysed reaction is (6R)-5,10-methylene-5,6,7,8-tetrahydrofolate + NAD(+) = (6R)-5,10-methenyltetrahydrofolate + NADH. In terms of biological role, catalyzes oxidation of cytoplasmic one-carbon units for purine biosynthesis. This is Methylenetetrahydrofolate dehydrogenase [NAD(+)] (MTD1) from Saccharomyces cerevisiae (strain ATCC 204508 / S288c) (Baker's yeast).